Consider the following 348-residue polypeptide: MNLKGKRITVHDMTLRDGMHPKRHQMTLDQMRAVATGLDAAGVPLIEVTHGDGLGGSSVNYGFPAHTDAEYLGAVIPLLKRAKVSALLLPGIGTVDHLKEAHALGVHTIRVATHCTEADVSEQHIAMARKLDMDTVGFLMMSHMNSPEGLVKQAKLMESYGANCIYITDSAGYMLPDDVKARLGAVRDALQPQTELGFHGHHNLAMGVANSIAAIEAGANRIDGAAAGLGAGAGNTPLEVFVAVCERMGIETGVDVWKIQDVAEDLVVPMMDFPIRLDRDALTLGYAGVYGSFLLFAKRAGDKYGIPARDILVELGRRGMVGGQEDMIEDTALTLAKARAAQAKREAA.

Residues 8 to 260 enclose the Pyruvate carboxyltransferase domain; the sequence is ITVHDMTLRD…ETGVDVWKIQ (253 aa). 16–17 contributes to the substrate binding site; sequence RD. Aspartate 17 contacts Mn(2+). Catalysis depends on histidine 20, which acts as the Proton acceptor. Substrate contacts are provided by serine 170 and histidine 199. Positions 199 and 201 each coordinate Mn(2+). A substrate-binding site is contributed by tyrosine 290.

It belongs to the 4-hydroxy-2-oxovalerate aldolase family.

The enzyme catalyses (S)-4-hydroxy-2-oxopentanoate = acetaldehyde + pyruvate. This chain is 4-hydroxy-2-oxovalerate aldolase 3, found in Burkholderia lata (strain ATCC 17760 / DSM 23089 / LMG 22485 / NCIMB 9086 / R18194 / 383).